A 282-amino-acid polypeptide reads, in one-letter code: uncharacterized protein (282 aa).

The HTH rpiR-type domain maps to 4-80 (STLTSKLESL…VDYLSDEKQY (77 aa)). Residues 40-59 (VAELAQAAGVSSASVIRFTR) constitute a DNA-binding region (H-T-H motif). In terms of domain architecture, SIS spans 125–265 (IAQKIVEAKR…FFKYLTLTNE (141 aa)).

This is an uncharacterized protein from Providencia stuartii.